The following is a 99-amino-acid chain: MPAKPAQDFFSLDANGQREALIIIKKLQCKILYSDKYYDDMFEYRHVILPKDLARLVPTSRLMSEMEWRQLGVQQSQGWVHYMIHKPEPHVLLFKRPRT.

This sequence belongs to the CKS family. As to quaternary structure, forms a homohexamer that can probably bind six kinase subunits.

Its function is as follows. Binds to the catalytic subunit of the cyclin dependent kinases (Cdc2) and is essential for their biological function. This chain is Cyclin-dependent kinases regulatory subunit, found in Leishmania mexicana.